Here is a 183-residue protein sequence, read N- to C-terminus: MAQRSGKITLYEGKHFTGRKLEVFGDCDNFQDQGFMNRVNSIRVESGAWVCFDHPDFRGQQFILEHGDYPEFFRWNGHNDHMGSCRPVGMHGEHFRIDIFEGCNFTGQCLEFVEDCPFLQSRGWAKSCVNAIKVYGDGAWVLYEEPNYRGRMYVLERGDYRCFSDWGAHSARVQSLRRVLNFF.

4 Beta/gamma crystallin 'Greek key' domains span residues 6–46, 47–89, 95–136, and 138–180; these read GKIT…RVES, GAWV…RPVG, FRID…KVYG, and GAWV…RRVL.

Belongs to the beta/gamma-crystallin family. As to quaternary structure, monomer. In terms of tissue distribution, primordially eye-specific. Present in lens nucleus. In the retina, expression in observed in the outer plexiform layer (containing photoreceptors axons and synapses) and photoreceptor outer segments (at protein level). Also detected in the auditory hindbrain where it is highly expressed in the medial nucleus of the trapezoid body, but also present in other nuclei of the superior olivary complex.

In terms of biological role, crystallins are the dominant structural components of the vertebrate eye lens. Also plays an important role for integrity and function of auditory nuclei. This chain is Gamma-crystallin N, found in Mus musculus (Mouse).